A 318-amino-acid chain; its full sequence is Glycine--tRNA ligase alpha subunit (318 aa).

Belongs to the class-II aminoacyl-tRNA synthetase family. Tetramer of two alpha and two beta subunits.

Its subcellular location is the cytoplasm. The enzyme catalyses tRNA(Gly) + glycine + ATP = glycyl-tRNA(Gly) + AMP + diphosphate. This chain is Glycine--tRNA ligase alpha subunit, found in Chelativorans sp. (strain BNC1).